The primary structure comprises 175 residues: Bacterial proteasome activator (175 aa).

A disordered region spans residues 152 to 175; the sequence is LPPGIQVPGAQRGGATHPGTGQYL. Positions 173-175 match the HbYX motif motif; the sequence is QYL.

This sequence belongs to the Bpa family. Forms a homooligomeric, either hexameric or heptameric, ring-like structure which stacks co-axially with the proteasomal alpha-rings.

Interacts with the core proteasome alpha-subunit (PrcA) through its C-terminal hydrophobic-tyrosine-X motif (HbYX motif). Interaction of Bpa with the proteasome stimulates proteasomal peptidase and casein degradation activity, which suggests Bpa could play a role in the removal of non-native or damaged proteins by influencing the conformation of the proteasome complex upon interaction. This Mycolicibacterium smegmatis (strain ATCC 700084 / mc(2)155) (Mycobacterium smegmatis) protein is Bacterial proteasome activator.